The chain runs to 317 residues: MSHAVRQPGTPPVLFLMGPTATGKTDCAVALARRLPVEIISVDSALVYRGMDIGTAKPSAALLAEVPHRLIDILDPSEAYSAARFRADALAAIHEIHAAGRVPLLAGGTMLYFRALEHGLSELPEADPALRRRLEGEAAAHGWGALHDRLAAVDPEAAARIHPHDAQRIQRALEVWELTGQSLSELQRAGRQRLPWPIGKWVLMPESRGELHRRIARRFDQMLAQGFIDEVAALRQRPDLHRALPAMRSVGYRQVWDYLDGCYDRETLRERGIAATRQFAKRQITWLRRERGVTAWLTPEQARDGLPERVGRFLSGG.

18–25 is an ATP binding site; it reads GPTATGKT. 20–25 lines the substrate pocket; sequence TATGKT. Interaction with substrate tRNA stretches follow at residues 43 to 46, 167 to 171, and 281 to 288; these read DSAL, QRIQR, and KRQITWLR.

Belongs to the IPP transferase family. As to quaternary structure, monomer. Requires Mg(2+) as cofactor.

It carries out the reaction adenosine(37) in tRNA + dimethylallyl diphosphate = N(6)-dimethylallyladenosine(37) in tRNA + diphosphate. Catalyzes the transfer of a dimethylallyl group onto the adenine at position 37 in tRNAs that read codons beginning with uridine, leading to the formation of N6-(dimethylallyl)adenosine (i(6)A). This Alkalilimnicola ehrlichii (strain ATCC BAA-1101 / DSM 17681 / MLHE-1) protein is tRNA dimethylallyltransferase.